Here is a 181-residue protein sequence, read N- to C-terminus: Cytidylate kinase (181 aa).

Gly-7–Ser-15 is a binding site for ATP.

Belongs to the cytidylate kinase family. Type 2 subfamily.

The protein localises to the cytoplasm. The catalysed reaction is CMP + ATP = CDP + ADP. It carries out the reaction dCMP + ATP = dCDP + ADP. This Methanoculleus marisnigri (strain ATCC 35101 / DSM 1498 / JR1) protein is Cytidylate kinase.